The primary structure comprises 163 residues: IQSSSMDQGILTEDSMNSFIRTLIQAGIWKNKVPKQTARTKDGMQTTVKKTEAEADARASQDTRLGFQPIVSVDVELLRQQRRFSSPRVLLSENTPLEPPPLYLTEEPVVLNRTSRRKREGKSHRGEYSVCDSESRWVTDKSSAVDIRGHQVTVLGEIRMGPS.

Positions 1–3 (IQS) are cleaved as a signal peptide. Positions 4–119 (SSMDQGILTE…VLNRTSRRKR (116 aa)) are excised as a propeptide. The tract at residues 36–61 (QTARTKDGMQTTVKKTEAEADARASQ) is disordered. Residues 49 to 61 (KKTEAEADARASQ) are compositionally biased toward basic and acidic residues. N-linked (GlcNAc...) asparagine glycosylation occurs at N112.

It belongs to the NGF-beta family.

The protein resides in the secreted. Functionally, seems to promote the survival of visceral and proprioceptive sensory neurons. This chain is Neurotrophin-3 (NTF3), found in Boa constrictor (Boa).